Consider the following 116-residue polypeptide: Putative gamma-glutamylcyclotransferase PH0828 (116 aa).

13-16 (YGTL) contributes to the substrate binding site. The active-site Proton acceptor is E76.

Belongs to the gamma-glutamylcyclotransferase family.

In terms of biological role, putative gamma-glutamylcyclotransferase. In Pyrococcus horikoshii (strain ATCC 700860 / DSM 12428 / JCM 9974 / NBRC 100139 / OT-3), this protein is Putative gamma-glutamylcyclotransferase PH0828.